The primary structure comprises 520 residues: MLNVPSQSFPGPSSQQRVASGGRSKVPLKQGRSLMDWIRLTKSGKDLTGLKGRLIEVTEEELKKHNKKDDCWICIRGFVYNVSPYMEYHPGGEDELMRAAGSDGTDLFDQVHRWVNYESMLKECLVGRMAMKPALPKDYHEEKKVLNGMLPQSQVTDTLAKEGPSSPSYDWFQTDSLVTIVIYTKQKDINLDSVIVDHRDDSFRAETVIKDYSYLVHVALSHEIQEDFSVLVVENVGKIEIVLKKKENTSWKCLGHPQENHNSFIPKKDTGLFYRKCQLVSKEDVTHDTKLFCLMLPPSTHLEVPVGQHVYLRLPITGTEIVKPYTPVCDSLFSEFKEPVLPNNIYIYFLIKIYPAGFFTPELDQLQIGDYVSVSNPEGNFIISQLQELEDLFLLAAGTGFTPMVKVLNYALTNIPSLRKVKLMFFNKTEDDIIWRSQLEKLAFKDKRFEVEFVLSAPTSEWSGKQGYISPALLSEFLKRRSDTSKVLICLCGPTPFTEQGMKMLHDLNFSKDEIHSFTA.

Residue M1 is modified to N-acetylmethionine. Over residues 1 to 16 (MLNVPSQSFPGPSSQQ) the composition is skewed to low complexity. Residues 1 to 27 (MLNVPSQSFPGPSSQQRVASGGRSKVP) form a disordered region. Residues 54–130 (LIEVTEEELK…LKECLVGRMA (77 aa)) form the Cytochrome b5 heme-binding domain. Heme contacts are provided by H89 and H112. Residues 164–255 (PSSPSYDWFQ…KENTSWKCLG (92 aa)) enclose the CS domain. The region spanning 272–384 (LFYRKCQLVS…SNPEGNFIIS (113 aa)) is the FAD-binding FR-type domain. Residues 364-379 (DQLQIGDYVSVSNPEG) and 391-423 (DLFLLAAGTGFTPMVKVLNYALTNIPSLRKVKL) each bind FAD.

It belongs to the flavoprotein pyridine nucleotide cytochrome reductase family. FAD serves as cofactor.

Its subcellular location is the endoplasmic reticulum. It catalyses the reaction 2 Fe(III)-[cytochrome b5] + NADH = 2 Fe(II)-[cytochrome b5] + NAD(+) + H(+). Functionally, NADH-cytochrome b5 reductase involved in endoplasmic reticulum stress response pathway. Plays a critical role in protecting pancreatic beta-cells against oxidant stress, possibly by protecting the cell from excess buildup of reactive oxygen species (ROS). The chain is Cytochrome b5 reductase 4 (CYB5R4) from Bos taurus (Bovine).